The following is a 156-amino-acid chain: Arginine repressor (156 aa).

The protein belongs to the ArgR family.

The protein resides in the cytoplasm. It functions in the pathway amino-acid biosynthesis; L-arginine biosynthesis [regulation]. Functionally, regulates arginine biosynthesis genes. This chain is Arginine repressor, found in Vibrio vulnificus (strain CMCP6).